The following is a 283-amino-acid chain: Release factor glutamine methyltransferase (283 aa).

S-adenosyl-L-methionine-binding residues include Asp143 and Asn189. Position 189–192 (189–192) interacts with substrate; that stretch reads NPPY.

The protein belongs to the protein N5-glutamine methyltransferase family. PrmC subfamily.

The enzyme catalyses L-glutaminyl-[peptide chain release factor] + S-adenosyl-L-methionine = N(5)-methyl-L-glutaminyl-[peptide chain release factor] + S-adenosyl-L-homocysteine + H(+). In terms of biological role, methylates the class 1 translation termination release factors RF1/PrfA and RF2/PrfB on the glutamine residue of the universally conserved GGQ motif. The protein is Release factor glutamine methyltransferase of Clostridium botulinum (strain Hall / ATCC 3502 / NCTC 13319 / Type A).